Reading from the N-terminus, the 156-residue chain is MNPQRRRRLWWVLALLLAGGLATTLVSMALQRNVAYLYTPSEVLRGDAGENSRFRLGGMVEKGSFQRASGALEAHFRVTDGDAQLPVSYDRILPDLFREGQAVVATGRMQSGVFVAEDVLAKHDETYMPKEVADKMGSAHRKHDVPAAANQGGALR.

The Cytoplasmic portion of the chain corresponds to M1–R8. A helical; Signal-anchor for type II membrane protein transmembrane segment spans residues L9–A29. Residues L30–R156 are Periplasmic-facing. Heme contacts are provided by H123 and Y127. The tract at residues K135–R156 is disordered.

It belongs to the CcmE/CycJ family.

It localises to the cell inner membrane. Its function is as follows. Heme chaperone required for the biogenesis of c-type cytochromes. Transiently binds heme delivered by CcmC and transfers the heme to apo-cytochromes in a process facilitated by CcmF and CcmH. The polypeptide is Cytochrome c-type biogenesis protein CcmE 2 (Xanthomonas oryzae pv. oryzae (strain MAFF 311018)).